The sequence spans 725 residues: Golgin candidate 4 (725 aa).

A disordered region spans residues 17-62; that stretch reads HDVHDDDEDDDEDLTIYGSTNGGTDRRNSNGFRYSRSPMANGFESP. A compositionally biased stretch (acidic residues) spans 21–30; that stretch reads DDDEDDDEDL. Residues 66–132 are a coiled coil; sequence EIERYKAEIN…LKESRLDLSR (67 aa). Disordered stretches follow at residues 134–183, 191–210, and 311–349; these read SNNN…SHKK, LEER…EKER, and ASQK…KEDM. Residues 148–175 are compositionally biased toward polar residues; it reads NRSQRSPTNWKNRNQMNNGIASKPNGTE. Coiled-coil stretches lie at residues 191-316, 344-407, and 437-563; these read LEER…QKST, PGKE…QTNE, and EIRK…LNRM. The span at 324–349 shows a compositional bias: basic and acidic residues; that stretch reads STEDLSRHLSSLDEEKAGTFPGKEDM. In terms of domain architecture, GRIP spans 562-613; the sequence is RMSMDSDFLVDRRIVIKLLVTYFQRNHSREVLDLMVRMLGFSEEEKQRIGLA. The span at 672-688 shows a compositional bias: basic and acidic residues; sequence ERERREAEDAANKEQEK. A disordered region spans residues 672 to 725; it reads ERERREAEDAANKEQEKATVSSTQRPKYEQSDSEFSTVPLTSSNSNHRLSRLLT. Residues 711 to 725 are compositionally biased toward low complexity; it reads LTSSNSNHRLSRLLT.

Its subcellular location is the golgi apparatus. In terms of biological role, golgi matrix protein playing a role in tethering of vesicles to Golgi membranes and in maintaining the overall structure of the Golgi apparatus. This Arabidopsis thaliana (Mouse-ear cress) protein is Golgin candidate 4 (GC4).